Reading from the N-terminus, the 420-residue chain is Glutamyl-tRNA reductase (420 aa).

Substrate-binding positions include 49–52 (TCNR), Ser107, 112–114 (EPQ), and Gln118. The active-site Nucleophile is the Cys50. 187 to 192 (GAGETI) is a binding site for NADP(+).

The protein belongs to the glutamyl-tRNA reductase family. As to quaternary structure, homodimer.

The enzyme catalyses (S)-4-amino-5-oxopentanoate + tRNA(Glu) + NADP(+) = L-glutamyl-tRNA(Glu) + NADPH + H(+). It functions in the pathway porphyrin-containing compound metabolism; protoporphyrin-IX biosynthesis; 5-aminolevulinate from L-glutamyl-tRNA(Glu): step 1/2. In terms of biological role, catalyzes the NADPH-dependent reduction of glutamyl-tRNA(Glu) to glutamate 1-semialdehyde (GSA). The chain is Glutamyl-tRNA reductase from Methylococcus capsulatus (strain ATCC 33009 / NCIMB 11132 / Bath).